Here is a 79-residue protein sequence, read N- to C-terminus: UPF0150 protein ssr1765 (79 aa).

It belongs to the UPF0150 family.

The protein is UPF0150 protein ssr1765 of Synechocystis sp. (strain ATCC 27184 / PCC 6803 / Kazusa).